An 806-amino-acid chain; its full sequence is Glycerol-3-phosphate acyltransferase (806 aa).

The HXXXXD motif signature appears at 305 to 310 (CHRSHM).

Belongs to the GPAT/DAPAT family.

It is found in the cell inner membrane. The enzyme catalyses sn-glycerol 3-phosphate + an acyl-CoA = a 1-acyl-sn-glycero-3-phosphate + CoA. It participates in phospholipid metabolism; CDP-diacylglycerol biosynthesis; CDP-diacylglycerol from sn-glycerol 3-phosphate: step 1/3. The chain is Glycerol-3-phosphate acyltransferase from Salmonella paratyphi B (strain ATCC BAA-1250 / SPB7).